A 911-amino-acid polypeptide reads, in one-letter code: Nitrate reductase [NADH], clone PBNBR1412 (911 aa).

Residues 53–72 are disordered; the sequence is NDAVDDSYDSSDDEDESHNR. Residues 56 to 68 show a composition bias toward acidic residues; the sequence is VDDSYDSSDDEDE. Cys191 contacts Mo-molybdopterin. Residues 539–614 form the Cytochrome b5 heme-binding domain; it reads AKMYSMSEVR…LEDYRIGELI (76 aa). Residues His574 and His597 each contribute to the heme site. In terms of domain architecture, FAD-binding FR-type spans 654–766; it reads REKVPVTLIE…KGPLGHIEYL (113 aa). FAD contacts are provided by residues 706–709, 723–727, Phe728, Phe735, 740–742, and Thr793; these read RAYT, VVKVY, and LMS.

This sequence belongs to the nitrate reductase family. In terms of assembly, homodimer. The cofactor is FAD. Heme is required as a cofactor. Requires Mo-molybdopterin as cofactor.

The enzyme catalyses nitrite + NAD(+) + H2O = nitrate + NADH + H(+). Nitrate reductase is a key enzyme involved in the first step of nitrate assimilation in plants, fungi and bacteria. The polypeptide is Nitrate reductase [NADH], clone PBNBR1412 (NIA2) (Brassica napus (Rape)).